The primary structure comprises 430 residues: UDP-N-acetylmuramoylalanine--D-glutamate ligase (430 aa).

109–115 (GTDGKST) is a binding site for ATP.

This sequence belongs to the MurCDEF family.

It is found in the cytoplasm. The catalysed reaction is UDP-N-acetyl-alpha-D-muramoyl-L-alanine + D-glutamate + ATP = UDP-N-acetyl-alpha-D-muramoyl-L-alanyl-D-glutamate + ADP + phosphate + H(+). Its pathway is cell wall biogenesis; peptidoglycan biosynthesis. Cell wall formation. Catalyzes the addition of glutamate to the nucleotide precursor UDP-N-acetylmuramoyl-L-alanine (UMA). This chain is UDP-N-acetylmuramoylalanine--D-glutamate ligase, found in Thermotoga sp. (strain RQ2).